Reading from the N-terminus, the 364-residue chain is Probable UDP-arabinopyranose mutase 4 (364 aa).

A DXD motif motif is present at residues 106 to 108 (DDD). Residue Arg154 is glycosylated (N-linked (Glc...) arginine).

It belongs to the RGP family. In terms of assembly, heteromers with RGP1 and RGP2. Requires Mn(2+) as cofactor. Mg(2+) serves as cofactor. Reversibly glycosylated in vitro by UDP-glucose, UDP-xylose and UDP-galactose, but not UDP-mannose. As to expression, specifically expressed in developing seeds.

It is found in the cytoplasm. The protein localises to the cytosol. Its subcellular location is the golgi apparatus. It catalyses the reaction UDP-beta-L-arabinofuranose = UDP-beta-L-arabinopyranose. Probable UDP-L-arabinose mutase involved in the biosynthesis of cell wall non-cellulosic polysaccharides. The polypeptide is Probable UDP-arabinopyranose mutase 4 (Arabidopsis thaliana (Mouse-ear cress)).